An 88-amino-acid polypeptide reads, in one-letter code: Small ribosomal subunit protein bS18B (88 aa).

Belongs to the bacterial ribosomal protein bS18 family. In terms of assembly, part of the 30S ribosomal subunit. Forms a tight heterodimer with protein bS6.

Binds as a heterodimer with protein bS6 to the central domain of the 16S rRNA, where it helps stabilize the platform of the 30S subunit. The polypeptide is Small ribosomal subunit protein bS18B (Mycolicibacterium paratuberculosis (strain ATCC BAA-968 / K-10) (Mycobacterium paratuberculosis)).